The sequence spans 665 residues: Fructose-1,6-bisphosphatase class 3 (665 aa).

It belongs to the FBPase class 3 family. Mn(2+) serves as cofactor.

The catalysed reaction is beta-D-fructose 1,6-bisphosphate + H2O = beta-D-fructose 6-phosphate + phosphate. It participates in carbohydrate biosynthesis; gluconeogenesis. This is Fructose-1,6-bisphosphatase class 3 from Clostridium novyi (strain NT).